The primary structure comprises 439 residues: Homogentisate 1,2-dioxygenase (439 aa).

3 residues coordinate Fe cation: His-335, Glu-341, and His-371.

The protein belongs to the homogentisate dioxygenase family. The cofactor is Fe cation.

The enzyme catalyses homogentisate + O2 = 4-maleylacetoacetate + H(+). The protein operates within amino-acid degradation; L-phenylalanine degradation; acetoacetate and fumarate from L-phenylalanine: step 4/6. The polypeptide is Homogentisate 1,2-dioxygenase (Drosophila melanogaster (Fruit fly)).